We begin with the raw amino-acid sequence, 321 residues long: D-alanine--D-alanine ligase (321 aa).

The ATP-grasp domain occupies R121–K315. P147–Q199 provides a ligand contact to ATP. Residues E268, E282, and N284 each contribute to the Mg(2+) site.

Belongs to the D-alanine--D-alanine ligase family. Requires Mg(2+) as cofactor. Mn(2+) serves as cofactor.

The protein resides in the cytoplasm. It carries out the reaction 2 D-alanine + ATP = D-alanyl-D-alanine + ADP + phosphate + H(+). It functions in the pathway cell wall biogenesis; peptidoglycan biosynthesis. In terms of biological role, cell wall formation. The chain is D-alanine--D-alanine ligase from Rickettsia massiliae (strain Mtu5).